An 829-amino-acid polypeptide reads, in one-letter code: RNA-directed RNA polymerase (829 aa).

A disordered region spans residues 1 to 39 (MKEPVDCRLSTPAGFSGTVPPPGRTKAARPGTIPVRRSR).

As to quaternary structure, forms a ribonucleoprotein complex with the 20S RNA, where a single polymerase molecule binds to a single viral RNA genome. Since the viral RNA is not encapsidated, ribonucleoprotein complex formation appears to be the strategy to survive in the host as persistent virus.

Its subcellular location is the host cytoplasm. The enzyme catalyses RNA(n) + a ribonucleoside 5'-triphosphate = RNA(n+1) + diphosphate. Functionally, RNA-directed RNA polymerase that replicates the viral (+) and (-) genome. The sequence is that of RNA-directed RNA polymerase from Saccharomyces cerevisiae (Baker's yeast).